An 81-amino-acid chain; its full sequence is uncharacterized protein (81 aa).

A disordered region spans residues 46–81 (ASSPVVKRKSLVKRKSPVKRSPLKKRSQMRTSPCEA). Over residues 51-73 (VKRKSLVKRKSPVKRSPLKKRSQ) the composition is skewed to basic residues.

This is an uncharacterized protein from Frog virus 3 (isolate Goorha) (FV-3).